A 491-amino-acid polypeptide reads, in one-letter code: MISKQEYQAQAAQGYNRIPLVQELLADLDTPLSLYLKLANRPYTYLLESVVGGERFGRYSFIGLPCSHYLKASGKHVDVYQNGEIVEQHDGNPLPFIEAFHNRFKTPEIPSLPRFTGGLVGYFGYETIYNFEHFAHRLKNTTKADPLGTPDILLMLSQELAVVDNLSGKIYLIVYADPSQPDGYERARERLEDIRTQLRQSCAIPLSLGSKHTEAVSEFGEEPFKACVNKIKDYIFAGDCMQVVPSQRMSMEFTDSSLALYRALRTLNPSPYLFYYDFGDFHIVGSSPEILVRRERDDVIVRPIAGTRLRGKTPAEDLANEQDLLSDAKEIAEHVMLIDLGRNDVGRISKTGEVKVTDKMVIEKYSHVMHIVSNVEGRLKDGMTNMDILAATFPAGTLSGAPKVRAMEIIEEVEPSKRGIYGGAVGVWGFNNDMDLAIAIRTAVVKNNTLYVQSGAGVVADSDPASEWQETQNKARAVIHAAQMVQEGLDK.

L-tryptophan-binding positions include serine 49 and 271-273 (PYL). 306-307 (GT) contributes to the chorismate binding site. Glutamate 333 lines the Mg(2+) pocket. Chorismate is bound by residues tyrosine 421, arginine 441, 455–457 (GAG), and glycine 457. Glutamate 470 contributes to the Mg(2+) binding site.

Belongs to the anthranilate synthase component I family. Heterotetramer consisting of two non-identical subunits: a beta subunit (TrpG) and a large alpha subunit (TrpE). Mg(2+) serves as cofactor.

The enzyme catalyses chorismate + L-glutamine = anthranilate + pyruvate + L-glutamate + H(+). It participates in amino-acid biosynthesis; L-tryptophan biosynthesis; L-tryptophan from chorismate: step 1/5. Feedback inhibited by tryptophan. Part of a heterotetrameric complex that catalyzes the two-step biosynthesis of anthranilate, an intermediate in the biosynthesis of L-tryptophan. In the first step, the glutamine-binding beta subunit (TrpG) of anthranilate synthase (AS) provides the glutamine amidotransferase activity which generates ammonia as a substrate that, along with chorismate, is used in the second step, catalyzed by the large alpha subunit of AS (TrpE) to produce anthranilate. In the absence of TrpG, TrpE can synthesize anthranilate directly from chorismate and high concentrations of ammonia. The chain is Anthranilate synthase component 1 (trpE) from Neisseria meningitidis serogroup C / serotype 2a (strain ATCC 700532 / DSM 15464 / FAM18).